The primary structure comprises 80 residues: Defensin-like protein 18 (80 aa).

Residues 1 to 29 (MAKFCTTITLILVALVLFADFEAPTIVKA) form the signal peptide. 4 disulfide bridges follow: cysteine 32/cysteine 80, cysteine 43/cysteine 64, cysteine 49/cysteine 74, and cysteine 53/cysteine 76.

Belongs to the DEFL family.

The protein resides in the secreted. Its function is as follows. Confers broad-spectrum resistance to pathogens. The protein is Defensin-like protein 18 (PDF1.5) of Arabidopsis thaliana (Mouse-ear cress).